The chain runs to 159 residues: MAKKNQKSGSNTIALNKKAKFDYELHERFEAGLALTGWEVKSLRAGKGNITDCYVIFKNNEAWLQACQIQPLLSASTHFVTDPFRNRKLLLNRREINRLQEAVEQKGYTVVPIALYWKAHMVKCEIAIAKGKQLHDKRQTEKERDWEREKQRLFQRDQR.

The interval 137–159 is disordered; that stretch reads KRQTEKERDWEREKQRLFQRDQR.

The protein belongs to the SmpB family.

The protein localises to the cytoplasm. Required for rescue of stalled ribosomes mediated by trans-translation. Binds to transfer-messenger RNA (tmRNA), required for stable association of tmRNA with ribosomes. tmRNA and SmpB together mimic tRNA shape, replacing the anticodon stem-loop with SmpB. tmRNA is encoded by the ssrA gene; the 2 termini fold to resemble tRNA(Ala) and it encodes a 'tag peptide', a short internal open reading frame. During trans-translation Ala-aminoacylated tmRNA acts like a tRNA, entering the A-site of stalled ribosomes, displacing the stalled mRNA. The ribosome then switches to translate the ORF on the tmRNA; the nascent peptide is terminated with the 'tag peptide' encoded by the tmRNA and targeted for degradation. The ribosome is freed to recommence translation, which seems to be the essential function of trans-translation. This Cellvibrio japonicus (strain Ueda107) (Pseudomonas fluorescens subsp. cellulosa) protein is SsrA-binding protein.